The following is a 1657-amino-acid chain: A disintegrin and metalloproteinase with thrombospondin motifs 7 (1657 aa).

The first 20 residues, 1–20 (MHRGPSLLLILCALASRVLG), serve as a signal peptide directing secretion. A propeptide spanning residues 21 to 220 (PASGLVTEGR…QQQQKRRQQR (200 aa)) is cleaved from the precursor. The N-linked (GlcNAc...) asparagine glycan is linked to asparagine 84. The segment at 165–221 (PGHAQPHVVYKHQGSRKQAQQGDSRPSGTCGMQVPPDLEQQREHWEQQQQKRRQQRS) is disordered. The segment covering 180-191 (RKQAQQGDSRPS) has biased composition (polar residues). A Cysteine switch motif is present at residues 192-199 (GTCGMQVP). Cysteine 194 is a binding site for Zn(2+). One can recognise a Peptidase M12B domain in the interval 226-437 (KWVETLVVAD…GWGLCLDDRP (212 aa)). 11 cysteine pairs are disulfide-bonded: cysteine 302/cysteine 356, cysteine 331/cysteine 338, cysteine 350/cysteine 432, cysteine 389/cysteine 416, cysteine 459/cysteine 482, cysteine 470/cysteine 488, cysteine 477/cysteine 507, cysteine 501/cysteine 512, cysteine 535/cysteine 572, cysteine 539/cysteine 577, and cysteine 550/cysteine 562. Histidine 372 lines the Zn(2+) pocket. Glutamate 373 is an active-site residue. Zn(2+) is bound by residues histidine 376 and histidine 382. A Disintegrin domain is found at 447–522 (VLPGVLYDVN…VPEGFQPEAV (76 aa)). The TSP type-1 1 domain maps to 523 to 578 (DGGWSGWSAWSDCSRSCGVGVRSSERQCTQPVPKNRGKYCVGERKRSQLCNLPACP). The N-linked (GlcNAc...) asparagine glycan is linked to asparagine 622. The tract at residues 683–794 (QTVSRTFKET…PGVHYQYTIQ (112 aa)) is spacer. TSP type-1 domains lie at 804–863 (PEFS…EPCP), 864–923 (PRWW…NRHV), and 925–978 (CPST…QPCQ). 5 disordered regions span residues 1009–1034 (LAPR…EELD), 1073–1127 (GGWT…GLEQ), 1140–1237 (EDTP…DVVE), 1283–1304 (GRDS…SSQH), and 1317–1384 (TVPT…ARNA). Positions 1211–1224 (PQSPIPTQPSPPSI) are enriched in pro residues. 2 stretches are compositionally biased toward polar residues: residues 1293 to 1304 (PTFSSPELSSQH) and 1327 to 1342 (PSGQ…TQSP). 4 TSP type-1 domains span residues 1366–1414 (QPSL…SGND), 1417–1477 (CTLA…CQPG), 1479–1522 (TKPP…PEPG), and 1524–1584 (CEES…LCSH). The PLAC domain occupies 1587 to 1627 (WPESSRPCATEDCELVEPPRCERDRLSFNFCETLRLLGRCQ).

Interacts with COMP. Zn(2+) is required as a cofactor. Post-translationally, N-glycosylated. Can be O-fucosylated by POFUT2 on a serine or a threonine residue found within the consensus sequence C1-X(2)-(S/T)-C2-G of the TSP type-1 repeat domains where C1 and C2 are the first and second cysteine residue of the repeat, respectively. Fucosylated repeats can then be further glycosylated by the addition of a beta-1,3-glucose residue by the glucosyltransferase, B3GALTL. Fucosylation mediates the efficient secretion of ADAMTS family members. Can also be C-glycosylated with one or two mannose molecules on tryptophan residues within the consensus sequence W-X-X-W of the TPRs. N- and C-glycosylations can also facilitate secretion. In terms of processing, O-glycosylated proteoglycan; contains chondroitin sulfate. May be cleaved by a furin endopeptidase. The precursor is sequentially processed.

It localises to the secreted. Its subcellular location is the extracellular space. The protein localises to the extracellular matrix. Functionally, metalloprotease. Was previously shown to degrade COMP. However, a later study found no activity against COMP. This Mus musculus (Mouse) protein is A disintegrin and metalloproteinase with thrombospondin motifs 7 (Adamts7).